Consider the following 294-residue polypeptide: MTTAITPDKKKLVSPKPTKTTSDKSKTKPRRSSKTSKKRKSKKGLFGCCAKKRKTKRSKKSAKRTKRSAPKKAPKKAPMKAPSKPAAKLVPQQAQASLQKPIQSGIVDADATVKTVVPRPPTPIPPTGVKPEPAPRSEPLYQPRSVSSTTPRTSATTGTTEQMVTAPATLPPPSAESKHLPQDPPGDASSPRVQRQYTAEKYSKEDQDDDDQKDLRKSVAYPSHKFFMTQYVKDECRVRRWVYEDSVPLMMESNMKHMLRMASNRIAACQSDKARRCDMMKDLNEMTEILDGNF.

A disordered region spans residues 1–215; it reads MTTAITPDKK…DQDDDDQKDL (215 aa). Composition is skewed to basic residues over residues 27–43 and 50–78; these read TKPR…KSKK and AKKR…KKAP. The segment covering 79 to 88 has biased composition (low complexity); sequence MKAPSKPAAK. Polar residues predominate over residues 92–102; the sequence is QQAQASLQKPI. Residues 118-136 are compositionally biased toward pro residues; that stretch reads PRPPTPIPPTGVKPEPAPR. Residues 145–160 show a composition bias toward low complexity; that stretch reads SVSSTTPRTSATTGTT.

This is an uncharacterized protein from Caenorhabditis elegans.